The primary structure comprises 907 residues: Cytochrome b561, DM13 and DOMON domain-containing protein At5g54830 (907 aa).

Positions 1-24 (MCDQRPNLLGSLVLLGFFIFFVNG) are cleaved as a signal peptide. Residues 31 to 139 (SSLIGHESEF…ASDFGHVLLS (109 aa)) form the DM13 domain. Residues 144 to 172 (SDTSKAESPPSESNDVAPGKSNNSEPFKA) are disordered. Polar residues predominate over residues 153–168 (PSESNDVAPGKSNNSE). 2 DOMON domains span residues 184–329 (DKYR…WALG) and 524–645 (QQVK…WAMG). One can recognise a Cytochrome b561 domain in the interval 653–850 (LTERNMHSVT…CVVTVAYLEY (198 aa)). The chain crosses the membrane as a helical span at residues 685–705 (VLGVHGFMMFLAWGILLPGGI). Heme b-binding residues include His689 and His723. Transmembrane regions (helical) follow at residues 730-750 (GLAIVFLGLLFAVAELNGFSF), 754-774 (HVKFGFTAIVLACAQPVNAWL), 795-815 (SHSIVGQSAVVVGVVALFTGM), and 829-849 (GLNLALGLWVFLCVVTVAYLE). Heme b-binding residues include His754 and His796. Residues 884–897 (GGFRDKDDEDRNGG) are compositionally biased toward basic and acidic residues. A disordered region spans residues 884–907 (GGFRDKDDEDRNGGRMEIQLEPLK).

Heme b serves as cofactor.

Its subcellular location is the membrane. In terms of biological role, may act as a catecholamine-responsive trans-membrane electron transporter. The chain is Cytochrome b561, DM13 and DOMON domain-containing protein At5g54830 from Arabidopsis thaliana (Mouse-ear cress).